Reading from the N-terminus, the 102-residue chain is Small ribosomal subunit protein uS10 (102 aa).

This sequence belongs to the universal ribosomal protein uS10 family. As to quaternary structure, part of the 30S ribosomal subunit.

Involved in the binding of tRNA to the ribosomes. This Sulfurisphaera tokodaii (strain DSM 16993 / JCM 10545 / NBRC 100140 / 7) (Sulfolobus tokodaii) protein is Small ribosomal subunit protein uS10.